The chain runs to 236 residues: 2,3,4,5-tetrahydropyridine-2,6-dicarboxylate N-acetyltransferase (236 aa).

It belongs to the transferase hexapeptide repeat family. DapH subfamily.

It carries out the reaction (S)-2,3,4,5-tetrahydrodipicolinate + acetyl-CoA + H2O = L-2-acetamido-6-oxoheptanedioate + CoA. Its pathway is amino-acid biosynthesis; L-lysine biosynthesis via DAP pathway; LL-2,6-diaminopimelate from (S)-tetrahydrodipicolinate (acetylase route): step 1/3. In terms of biological role, catalyzes the transfer of an acetyl group from acetyl-CoA to tetrahydrodipicolinate. This is 2,3,4,5-tetrahydropyridine-2,6-dicarboxylate N-acetyltransferase from Clostridium botulinum (strain Langeland / NCTC 10281 / Type F).